Reading from the N-terminus, the 725-residue chain is Rab-like protein 6 (725 aa).

Residue Met1 is modified to N-acetylmethionine. The tract at residues Gly39–Ser279 is small GTPase-like. GTP-binding positions include Gly50–Thr57, Asp100–Lys104, and Tyr177–Asp179. Disordered regions lie at residues Gly281–Ala364 and Pro378–Leu725. Composition is skewed to low complexity over residues Gln291–Leu325 and Ala343–Pro353. Basic and acidic residues predominate over residues Gly410 to Val427. Phosphoserine is present on residues Ser414, Ser436, Ser438, Ser480, Ser482, Ser483, and Ser502. Residues Gln499–Ser514 are compositionally biased toward polar residues. Basic and acidic residues predominate over residues Asp537–Val549. The span at Asp569–Ser578 shows a compositional bias: acidic residues. A phosphoserine mark is found at Ser575 and Ser594. The residue at position 597 (Thr597) is a Phosphothreonine. Over residues Met632–Lys649 the composition is skewed to basic and acidic residues. Ser637, Ser638, and Ser644 each carry phosphoserine. The interval Lys652 to Lys690 is interaction with CDKN2A. A compositionally biased stretch (basic residues) spans Thr666–Ser675. Residues Leu707–Leu725 are compositionally biased toward gly residues.

The protein belongs to the small GTPase superfamily. Rab family.

It is found in the nucleus. The protein localises to the cytoplasm. In terms of biological role, may enhance cellular proliferation. May reduce growth inhibitory activity of CDKN2A. This Mus musculus (Mouse) protein is Rab-like protein 6 (Rabl6).